A 382-amino-acid polypeptide reads, in one-letter code: Lipid-A-disaccharide synthase (382 aa).

The protein belongs to the LpxB family.

It catalyses the reaction 2-N,3-O-bis[(3R)-3-hydroxytetradecanoyl]-alpha-D-glucosaminyl 1-phosphate + UDP-2-N,3-O-bis[(3R)-3-hydroxytetradecanoyl]-alpha-D-glucosamine = lipid A disaccharide (E. coli) + UDP + H(+). The catalysed reaction is a lipid X + a UDP-2-N,3-O-bis[(3R)-3-hydroxyacyl]-alpha-D-glucosamine = a lipid A disaccharide + UDP + H(+). The protein operates within glycolipid biosynthesis; lipid IV(A) biosynthesis; lipid IV(A) from (3R)-3-hydroxytetradecanoyl-[acyl-carrier-protein] and UDP-N-acetyl-alpha-D-glucosamine: step 5/6. In terms of biological role, condensation of UDP-2,3-diacylglucosamine and 2,3-diacylglucosamine-1-phosphate to form lipid A disaccharide, a precursor of lipid A, a phosphorylated glycolipid that anchors the lipopolysaccharide to the outer membrane of the cell. This Shigella dysenteriae serotype 1 (strain Sd197) protein is Lipid-A-disaccharide synthase.